Reading from the N-terminus, the 364-residue chain is Mannose-1-phosphate guanyltransferase (364 aa).

This sequence belongs to the transferase hexapeptide repeat family.

It is found in the cytoplasm. The catalysed reaction is alpha-D-mannose 1-phosphate + GTP + H(+) = GDP-alpha-D-mannose + diphosphate. It functions in the pathway nucleotide-sugar biosynthesis; GDP-alpha-D-mannose biosynthesis; GDP-alpha-D-mannose from alpha-D-mannose 1-phosphate (GTP route): step 1/1. Involved in cell wall synthesis where it is required for glycosylation. Involved in cell cycle progression through cell-size checkpoint. In Aspergillus fumigatus (strain ATCC MYA-4609 / CBS 101355 / FGSC A1100 / Af293) (Neosartorya fumigata), this protein is Mannose-1-phosphate guanyltransferase (mpg1).